A 155-amino-acid polypeptide reads, in one-letter code: 3-hydroxyacyl-[acyl-carrier-protein] dehydratase FabZ (155 aa).

Histidine 61 is a catalytic residue.

Belongs to the thioester dehydratase family. FabZ subfamily.

It localises to the cytoplasm. The catalysed reaction is a (3R)-hydroxyacyl-[ACP] = a (2E)-enoyl-[ACP] + H2O. Involved in unsaturated fatty acids biosynthesis. Catalyzes the dehydration of short chain beta-hydroxyacyl-ACPs and long chain saturated and unsaturated beta-hydroxyacyl-ACPs. In Synechococcus sp. (strain ATCC 27144 / PCC 6301 / SAUG 1402/1) (Anacystis nidulans), this protein is 3-hydroxyacyl-[acyl-carrier-protein] dehydratase FabZ.